The sequence spans 123 residues: Small ribosomal subunit protein uS12 (123 aa).

The segment at 1 to 22 (MATINQLVRKPRKRKAKTSDVR) is disordered. Asp-89 bears the 3-methylthioaspartic acid mark. A disordered region spans residues 101 to 123 (ALDTSGVNDRKRGRSKYGTKRPK). Over residues 111 to 123 (KRGRSKYGTKRPK) the composition is skewed to basic residues.

This sequence belongs to the universal ribosomal protein uS12 family. As to quaternary structure, part of the 30S ribosomal subunit. Contacts proteins S8 and S17. May interact with IF1 in the 30S initiation complex.

Its function is as follows. With S4 and S5 plays an important role in translational accuracy. In terms of biological role, interacts with and stabilizes bases of the 16S rRNA that are involved in tRNA selection in the A site and with the mRNA backbone. Located at the interface of the 30S and 50S subunits, it traverses the body of the 30S subunit contacting proteins on the other side and probably holding the rRNA structure together. The combined cluster of proteins S8, S12 and S17 appears to hold together the shoulder and platform of the 30S subunit. The chain is Small ribosomal subunit protein uS12 from Teredinibacter turnerae (strain ATCC 39867 / T7901).